The following is a 302-amino-acid chain: Glycine--tRNA ligase alpha subunit (302 aa).

The protein belongs to the class-II aminoacyl-tRNA synthetase family. In terms of assembly, tetramer of two alpha and two beta subunits.

It is found in the cytoplasm. The enzyme catalyses tRNA(Gly) + glycine + ATP = glycyl-tRNA(Gly) + AMP + diphosphate. This is Glycine--tRNA ligase alpha subunit from Haemophilus ducreyi (strain 35000HP / ATCC 700724).